Here is a 287-residue protein sequence, read N- to C-terminus: MFARLPLYLRLVRMDKPIGSLLLLWPTLNALWIASDGHPSVSLLVIFALGTILMRSAGCAINDYADRDFDRYVKRTENRPITSGKIKAWEAVALAAGLSLVAFLLILPLNALTKELSVAALFVAGTYPFTKRFFAIPQAYLGIAFGFGIPMAFAAVQNQVPLLAWVMLIANVFWSVAYDTEYAMVDRDDDIKIGIRTSALTFGRFDVLAIMLCYAVTLGIYVGIGFTLGFGVLYWIGLAAAAGCAVYHYTLIKGRERMPCFAAFRHNNWLGGALFAGIAAHYAAQAF.

Helical transmembrane passes span 41-61 (VSLLVIFALGTILMRSAGCAI), 92-112 (VALAAGLSLVAFLLILPLNAL), 133-153 (FFAIPQAYLGIAFGFGIPMAF), 160-180 (VPLLAWVMLIANVFWSVAYDT), 197-217 (TSALTFGRFDVLAIMLCYAVT), and 267-287 (NNWLGGALFAGIAAHYAAQAF).

Belongs to the UbiA prenyltransferase family. Mg(2+) is required as a cofactor.

It is found in the cell inner membrane. The catalysed reaction is all-trans-octaprenyl diphosphate + 4-hydroxybenzoate = 4-hydroxy-3-(all-trans-octaprenyl)benzoate + diphosphate. The protein operates within cofactor biosynthesis; ubiquinone biosynthesis. Functionally, catalyzes the prenylation of para-hydroxybenzoate (PHB) with an all-trans polyprenyl group. Mediates the second step in the final reaction sequence of ubiquinone-8 (UQ-8) biosynthesis, which is the condensation of the polyisoprenoid side chain with PHB, generating the first membrane-bound Q intermediate 3-octaprenyl-4-hydroxybenzoate. The protein is 4-hydroxybenzoate octaprenyltransferase of Paraburkholderia phymatum (strain DSM 17167 / CIP 108236 / LMG 21445 / STM815) (Burkholderia phymatum).